Reading from the N-terminus, the 455-residue chain is Polyadenylation factor subunit 2 (455 aa).

WD repeat units lie at residues 80–119, 122–162, 164–203, 206–245, 248–288, 291–331, and 337–376; these read KVKH…FETI, AHDT…KELD, IHTE…QERV, GHHW…CVST, KFKH…NELM, RDEV…EKPI, and AHEK…DPNA. 2 disordered regions span residues 406 to 425 and 430 to 455; these read EYGA…TQYN and RVPE…GLSI. Positions 432–446 are enriched in basic and acidic residues; the sequence is PEIKEPTPTTDKEQR.

The protein resides in the nucleus. Its function is as follows. Required for 3'-end cleavage and polyadenylation of pre-mRNAs. Also involved in chromosome segregation where it has a role in chromosome attachment to the mitotic spindle. The protein is Polyadenylation factor subunit 2 (PFS2) of Candida glabrata (strain ATCC 2001 / BCRC 20586 / JCM 3761 / NBRC 0622 / NRRL Y-65 / CBS 138) (Yeast).